Consider the following 164-residue polypeptide: 3-dehydroquinate dehydratase (164 aa).

Tyrosine 22 functions as the Proton acceptor in the catalytic mechanism. Asparagine 73, histidine 79, and aspartate 86 together coordinate substrate. Catalysis depends on histidine 99, which acts as the Proton donor. Substrate-binding positions include 100–101 (IS) and arginine 110.

Belongs to the type-II 3-dehydroquinase family. Homododecamer.

It carries out the reaction 3-dehydroquinate = 3-dehydroshikimate + H2O. The protein operates within metabolic intermediate biosynthesis; chorismate biosynthesis; chorismate from D-erythrose 4-phosphate and phosphoenolpyruvate: step 3/7. In terms of biological role, catalyzes a trans-dehydration via an enolate intermediate. The polypeptide is 3-dehydroquinate dehydratase (Aliarcobacter butzleri (strain RM4018) (Arcobacter butzleri)).